The primary structure comprises 217 residues: Uracil-DNA glycosylase (217 aa).

D62 serves as the catalytic Proton acceptor.

The protein belongs to the uracil-DNA glycosylase (UDG) superfamily. UNG family.

Its subcellular location is the cytoplasm. It carries out the reaction Hydrolyzes single-stranded DNA or mismatched double-stranded DNA and polynucleotides, releasing free uracil.. Excises uracil residues from the DNA which can arise as a result of misincorporation of dUMP residues by DNA polymerase or due to deamination of cytosine. This is Uracil-DNA glycosylase from Streptococcus thermophilus (strain ATCC BAA-491 / LMD-9).